The chain runs to 152 residues: 6,7-dimethyl-8-ribityllumazine synthase (152 aa).

5-amino-6-(D-ribitylamino)uracil is bound by residues Phe22, 56-58 (AFE), and 79-81 (AVI). 84 to 85 (AT) provides a ligand contact to (2S)-2-hydroxy-3-oxobutyl phosphate. Residue His87 is the Proton donor of the active site. Residue Phe112 participates in 5-amino-6-(D-ribitylamino)uracil binding. Arg126 lines the (2S)-2-hydroxy-3-oxobutyl phosphate pocket.

The protein belongs to the DMRL synthase family.

It catalyses the reaction (2S)-2-hydroxy-3-oxobutyl phosphate + 5-amino-6-(D-ribitylamino)uracil = 6,7-dimethyl-8-(1-D-ribityl)lumazine + phosphate + 2 H2O + H(+). It participates in cofactor biosynthesis; riboflavin biosynthesis; riboflavin from 2-hydroxy-3-oxobutyl phosphate and 5-amino-6-(D-ribitylamino)uracil: step 1/2. Functionally, catalyzes the formation of 6,7-dimethyl-8-ribityllumazine by condensation of 5-amino-6-(D-ribitylamino)uracil with 3,4-dihydroxy-2-butanone 4-phosphate. This is the penultimate step in the biosynthesis of riboflavin. In Carboxydothermus hydrogenoformans (strain ATCC BAA-161 / DSM 6008 / Z-2901), this protein is 6,7-dimethyl-8-ribityllumazine synthase.